The chain runs to 624 residues: LRR receptor kinase BAK1 (624 aa).

A signal peptide spans 1-25; it reads MAAHRWAVWAVLLLRLLVPAARVLA. Topologically, residues 26–237 are extracellular; sequence NMEGDALHSL…QSPGSSSSTG (212 aa). 4 LRR repeats span residues 91–115, 117–139, 140–163, and 164–188; these read LKNL…LGNL, NLVS…LGNL, LKLR…LTAI, and TALQ…SFSL. 5 N-linked (GlcNAc...) asparagine glycosylation sites follow: Asn-103, Asn-114, Asn-127, Asn-149, and Asn-175. Residues 205–236 are disordered; it reads TTKPCPGAPPFSPPPPYNPPTPVQSPGSSSST. Residues 210 to 227 are compositionally biased toward pro residues; the sequence is PGAPPFSPPPPYNPPTPV. A helical transmembrane segment spans residues 238-258; sequence AIAGGVAAGAALLFAIPAIGF. The Cytoplasmic portion of the chain corresponds to 259–624; sequence AWYRRRKPQE…LHAVELSGPR (366 aa). One can recognise a Protein kinase domain in the interval 301-588; the sequence is FSNKNILGRG…GLAERWEEWQ (288 aa). ATP-binding positions include 307 to 315 and Lys-329; that span reads LGRGGFGKV. The Proton acceptor role is filled by Asp-428.

Belongs to the protein kinase superfamily. Ser/Thr protein kinase family. As to quaternary structure, forms homodimers. Interacts with BRI1. Interacts with REM4.1. As to expression, expressed in developing lateral roots, shoot apex, leaf blades, lamina joints and flowers. Expressed at low levels in leaf sheaths and panicles.

It is found in the cell membrane. It catalyses the reaction L-seryl-[protein] + ATP = O-phospho-L-seryl-[protein] + ADP + H(+). It carries out the reaction L-threonyl-[protein] + ATP = O-phospho-L-threonyl-[protein] + ADP + H(+). LRR receptor kinase involved in defense response. Does not seem to be required specifically for XA21-mediated immunity or basal resistance to Xanthomonas oryzae pv. oryzae (Xoo), or immunity to Magnaporthe oryzae. Involved in brassinosteroid (BR) signaling pathway. Acts as a coreceptor of BRI1. Forms at the plasma membrane a receptor complex with BRI1 which is activated in response to brassinolide. Phosphorylates BRI1. Required for normal plant growth and leaf development. Possesses kinase activity in vitro. The polypeptide is LRR receptor kinase BAK1 (Oryza sativa subsp. japonica (Rice)).